Reading from the N-terminus, the 386-residue chain is GTPase Obg (386 aa).

The Obg domain maps to 4–162; sequence SNFVDYVKIY…RTVILQLKLL (159 aa). A disordered region spans residues 18 to 44; that stretch reads KGGRGSSHFRREKYIPKGGPDGGDGGR. The region spanning 163–329 is the OBG-type G domain; the sequence is ADVGLVGFPN…LKDLLWKELN (167 aa). GTP-binding positions include 169–176, 194–198, 216–219, 283–286, and 310–312; these read GFPNAGKS, FTTLE, DIPG, TKSD, and SSI. S176 and T196 together coordinate Mg(2+). Residues 357 to 386 are disordered; that stretch reads YIFPVDEDEDDPDEEYEEYWDDDEDEDTRK.

This sequence belongs to the TRAFAC class OBG-HflX-like GTPase superfamily. OBG GTPase family. In terms of assembly, monomer. It depends on Mg(2+) as a cofactor.

Its subcellular location is the cytoplasm. Its function is as follows. An essential GTPase which binds GTP, GDP and possibly (p)ppGpp with moderate affinity, with high nucleotide exchange rates and a fairly low GTP hydrolysis rate. Plays a role in control of the cell cycle, stress response, ribosome biogenesis and in those bacteria that undergo differentiation, in morphogenesis control. This chain is GTPase Obg, found in Parabacteroides distasonis (strain ATCC 8503 / DSM 20701 / CIP 104284 / JCM 5825 / NCTC 11152).